A 131-amino-acid chain; its full sequence is MLSRLFAPKVTVSAHCDLPCGVYDPAQARIEAESVKAVQEKMAGNDDPHFQTRATVIKEQRAELAKHHVSVLWSDYFKPPHFEKYPELHQLVNDTLKALSAAKGSKDPATGQKALDYIAQIDKIFWETKKA.

A propeptide spanning residues 1 to 14 is cleaved from the precursor; it reads MLSRLFAPKVTVSA. The Ni(2+) site is built by His-15, Cys-16, and Cys-20.

The protein belongs to the nickel superoxide dismutase family. In terms of assembly, homohexamer. The hexameric protein has a roughly the shape of a hollow sphere with an outer diameter of 60 angstroms and a large interior cavity. It depends on Ni(2+) as a cofactor.

The protein resides in the cytoplasm. The enzyme catalyses 2 superoxide + 2 H(+) = H2O2 + O2. The polypeptide is Superoxide dismutase [Ni] (sodN) (Streptomyces coelicolor (strain ATCC BAA-471 / A3(2) / M145)).